We begin with the raw amino-acid sequence, 193 residues long: MKFETPSRFKFTPYLEREYQFGLDPNRPLCRGFLQFDGCPRGNSCPDKHLAPTFLNKIVCKHWLRGLCKKGLNCEFLHEYNLQKMPECQFYVKNGFCTQSPDCQYLHIDPASKIPVCFNYEKGFCKMGPECSRKHIRRMPCELYMTGFCPKGRVCEFAHPKFVGIYDYMIIKPNPKDKAKDETKQETKEEALQ.

5 consecutive C3H1-type zinc fingers follow at residues 24–52 (DPNRPLCRGFLQFDGCPRGNSCPDKHLAP), 54–81 (FLNKIVCKHWLRGLCKKGLNCEFLHEYN), 82–110 (LQKMPECQFYVKNGFCTQSPDCQYLHIDP), 111–138 (ASKIPVCFNYEKGFCKMGPECSRKHIRR), and 140–162 (PCELYMTGFCPKGRVCEFAHPKF).

Belongs to the CPSF4/YTH1 family.

The protein resides in the nucleus. Functionally, component of the cleavage factor I (CF I) involved in pre-mRNA 3'-end processing. The chain is mRNA 3'-end-processing protein YTH1 (YTH1) from Yarrowia lipolytica (strain CLIB 122 / E 150) (Yeast).